The following is a 504-amino-acid chain: Maturase K (504 aa).

This sequence belongs to the intron maturase 2 family. MatK subfamily.

It localises to the plastid. Its subcellular location is the chloroplast. In terms of biological role, usually encoded in the trnK tRNA gene intron. Probably assists in splicing its own and other chloroplast group II introns. In Aucuba japonica (Japanese laurel), this protein is Maturase K.